Reading from the N-terminus, the 684-residue chain is Glycine--tRNA ligase beta subunit (684 aa).

The protein belongs to the class-II aminoacyl-tRNA synthetase family. Tetramer of two alpha and two beta subunits.

The protein resides in the cytoplasm. The enzyme catalyses tRNA(Gly) + glycine + ATP = glycyl-tRNA(Gly) + AMP + diphosphate. This is Glycine--tRNA ligase beta subunit from Pseudomonas entomophila (strain L48).